The sequence spans 203 residues: Protein S40-6 (203 aa).

The interval 1 to 33 is disordered; it reads MAKGRKPTTMNRSDRYLGSYTYGDSHGNSVTDE.

Belongs to the senescence regulator S40 family.

Its subcellular location is the cytoplasm. The protein is Protein S40-6 of Arabidopsis thaliana (Mouse-ear cress).